The sequence spans 316 residues: Ornithine carbamoyltransferase (316 aa).

Residues 57-60 (STRT), glutamine 84, arginine 108, and 135-138 (HPCQ) contribute to the carbamoyl phosphate site. L-ornithine is bound by residues asparagine 166, aspartate 230, and 234 to 235 (SM). Residues 269–270 (CL) and arginine 297 contribute to the carbamoyl phosphate site.

It belongs to the aspartate/ornithine carbamoyltransferase superfamily. OTCase family.

The protein resides in the cytoplasm. It catalyses the reaction carbamoyl phosphate + L-ornithine = L-citrulline + phosphate + H(+). Its pathway is amino-acid biosynthesis; L-arginine biosynthesis; L-arginine from L-ornithine and carbamoyl phosphate: step 1/3. Functionally, reversibly catalyzes the transfer of the carbamoyl group from carbamoyl phosphate (CP) to the N(epsilon) atom of ornithine (ORN) to produce L-citrulline. The chain is Ornithine carbamoyltransferase (argF) from Bacillus cereus (strain ATCC 14579 / DSM 31 / CCUG 7414 / JCM 2152 / NBRC 15305 / NCIMB 9373 / NCTC 2599 / NRRL B-3711).